Reading from the N-terminus, the 479-residue chain is Aspartyl/glutamyl-tRNA(Asn/Gln) amidotransferase subunit B (479 aa).

It belongs to the GatB/GatE family. GatB subfamily. As to quaternary structure, heterotrimer of A, B and C subunits.

The enzyme catalyses L-glutamyl-tRNA(Gln) + L-glutamine + ATP + H2O = L-glutaminyl-tRNA(Gln) + L-glutamate + ADP + phosphate + H(+). It catalyses the reaction L-aspartyl-tRNA(Asn) + L-glutamine + ATP + H2O = L-asparaginyl-tRNA(Asn) + L-glutamate + ADP + phosphate + 2 H(+). In terms of biological role, allows the formation of correctly charged Asn-tRNA(Asn) or Gln-tRNA(Gln) through the transamidation of misacylated Asp-tRNA(Asn) or Glu-tRNA(Gln) in organisms which lack either or both of asparaginyl-tRNA or glutaminyl-tRNA synthetases. The reaction takes place in the presence of glutamine and ATP through an activated phospho-Asp-tRNA(Asn) or phospho-Glu-tRNA(Gln). The sequence is that of Aspartyl/glutamyl-tRNA(Asn/Gln) amidotransferase subunit B from Streptococcus pyogenes serotype M5 (strain Manfredo).